The primary structure comprises 374 residues: Proton-coupled zinc antiporter SLC30A8 (374 aa).

The Cytoplasmic segment spans residues M1 to K67. Positions Y18–N48 are disordered. The Zn(2+) site is built by H45, C46, and H47. The HCH Motif; seals regulatory zinc-binding pocket motif lies at H45–H47. A helical transmembrane segment spans residues L68–I88. Residues A89 to S91 lie on the Lumenal, vesicle side of the membrane. Residues L92–L112 traverse the membrane as a helical segment. Zn(2+) contacts are provided by H100, D104, and H131. Topologically, residues C113–E134 are cytoplasmic. The chain crosses the membrane as a helical span at residues I135–L155. Topologically, residues A156 to G169 are lumenal, vesicle. Residues T170–L190 form a helical membrane-spanning segment. Topologically, residues H191–A222 are cytoplasmic. A helical transmembrane segment spans residues F223–I243. Zn(2+)-binding residues include H225 and D229. The Lumenal, vesicle segment spans residues Y244–M251. Residues A252–L272 form a helical membrane-spanning segment. At R273–Q374 the chain is on the cytoplasmic side. H306, H323, H350, E357, C366, and C369 together coordinate Zn(2+).

The protein belongs to the cation diffusion facilitator (CDF) transporter (TC 2.A.4) family. SLC30A subfamily. In terms of assembly, homodimer.

The protein localises to the cytoplasmic vesicle. Its subcellular location is the secretory vesicle membrane. It localises to the cell membrane. It catalyses the reaction Zn(2+)(in) + 2 H(+)(out) = Zn(2+)(out) + 2 H(+)(in). Its function is as follows. Proton-coupled zinc ion antiporter mediating the entry of zinc into the lumen of pancreatic beta cell secretory granules, thereby regulating insulin secretion. In Xenopus tropicalis (Western clawed frog), this protein is Proton-coupled zinc antiporter SLC30A8 (slc30a8).